The sequence spans 72 residues: DNA-directed RNA polymerase subunit omega (72 aa).

This sequence belongs to the RNA polymerase subunit omega family. In terms of assembly, the RNAP catalytic core consists of 2 alpha, 1 beta, 1 beta' and 1 omega subunit. When a sigma factor is associated with the core the holoenzyme is formed, which can initiate transcription.

It catalyses the reaction RNA(n) + a ribonucleoside 5'-triphosphate = RNA(n+1) + diphosphate. Its function is as follows. Promotes RNA polymerase assembly. Latches the N- and C-terminal regions of the beta' subunit thereby facilitating its interaction with the beta and alpha subunits. The chain is DNA-directed RNA polymerase subunit omega from Clostridium kluyveri (strain NBRC 12016).